The primary structure comprises 214 residues: Transcription factor 23 (214 aa).

Disordered stretches follow at residues 1 to 86 (MSQR…ARER) and 174 to 214 (DSTT…LGDK). Residues 40–49 (TRQDPWEERS) are compositionally biased toward basic and acidic residues. The bHLH domain occupies 76 to 128 (EASPENAARERSRVRTLRQAFLALQAALPAVPPDTKLSKLDVLVLAASYIAHL). The span at 174–183 (DSTTASTPSQ) shows a compositional bias: polar residues.

In terms of assembly, forms inactive heterodimeric complexes with TCF3. In terms of tissue distribution, expressed in liver, kidney and spleen.

The protein resides in the nucleus. Functionally, inhibits E-box-mediated binding and transactivation of bHLH factors. Inhibitory effect is similar to that of ID proteins. Inhibits the formation of TCF3 and MYOD1 homodimers and heterodimers. Lacks DNA binding activity. Seems to play a role in the inhibition of myogenesis. This Homo sapiens (Human) protein is Transcription factor 23 (TCF23).